We begin with the raw amino-acid sequence, 329 residues long: Ankyrin repeat and SOCS box protein 5 (329 aa).

ANK repeat units follow at residues A69–A98, D102–A131, D135–L164, C167–Q196, H200–K229, and Y232–A261. In terms of domain architecture, SOCS box spans M278–R329.

It belongs to the ankyrin SOCS box (ASB) family.

Its pathway is protein modification; protein ubiquitination. May be a substrate-recognition component of a SCF-like ECS (Elongin-Cullin-SOCS-box protein) E3 ubiquitin-protein ligase complex which mediates the ubiquitination and subsequent proteasomal degradation of target proteins. May play a role in the initiation of arteriogenesis. The polypeptide is Ankyrin repeat and SOCS box protein 5 (ASB5) (Homo sapiens (Human)).